Reading from the N-terminus, the 389-residue chain is Glutamate 5-kinase (389 aa).

K16 serves as a coordination point for ATP. Residues S56, D143, and N155 each contribute to the substrate site. 175-176 (SD) serves as a coordination point for ATP. Residues 281 to 358 (AGELHVDEGA…AEIEAILGYA (78 aa)) enclose the PUA domain.

The protein belongs to the glutamate 5-kinase family.

The protein resides in the cytoplasm. The enzyme catalyses L-glutamate + ATP = L-glutamyl 5-phosphate + ADP. The protein operates within amino-acid biosynthesis; L-proline biosynthesis; L-glutamate 5-semialdehyde from L-glutamate: step 1/2. In terms of biological role, catalyzes the transfer of a phosphate group to glutamate to form L-glutamate 5-phosphate. The protein is Glutamate 5-kinase of Rhizobium etli (strain ATCC 51251 / DSM 11541 / JCM 21823 / NBRC 15573 / CFN 42).